The chain runs to 203 residues: Hypoxanthine-guanine phosphoribosyltransferase (203 aa).

Diphosphate-binding residues include lysine 66 and glycine 67. Residues glutamate 122 and aspartate 123 each coordinate Mg(2+). Residue aspartate 126 is the Proton acceptor of the active site. GMP is bound by residues lysine 154, 175 to 176 (FV), and aspartate 182. Diphosphate is bound at residue arginine 188.

It belongs to the purine/pyrimidine phosphoribosyltransferase family. The cofactor is Mg(2+).

The protein localises to the cytoplasm. The catalysed reaction is IMP + diphosphate = hypoxanthine + 5-phospho-alpha-D-ribose 1-diphosphate. It catalyses the reaction GMP + diphosphate = guanine + 5-phospho-alpha-D-ribose 1-diphosphate. It functions in the pathway purine metabolism; IMP biosynthesis via salvage pathway; IMP from hypoxanthine: step 1/1. Its pathway is purine metabolism; GMP biosynthesis via salvage pathway; GMP from guanine: step 1/1. Its function is as follows. Purine salvage pathway enzyme that catalyzes the transfer of the ribosyl-5-phosphate group from 5-phospho-alpha-D-ribose 1-diphosphate (PRPP) to the N9 position of the 6-oxopurines hypoxanthine and guanine to form the corresponding ribonucleotides IMP (inosine 5'-monophosphate) and GMP (guanosine 5'-monophosphate), with the release of PPi. This chain is Hypoxanthine-guanine phosphoribosyltransferase (hpt), found in Mycobacterium avium.